The following is a 391-amino-acid chain: Alkanesulfonate monooxygenase (391 aa).

Belongs to the SsuD family.

The enzyme catalyses an alkanesulfonate + FMNH2 + O2 = an aldehyde + FMN + sulfite + H2O + 2 H(+). In terms of biological role, catalyzes the desulfonation of aliphatic sulfonates. The polypeptide is Alkanesulfonate monooxygenase (Rhodopseudomonas palustris (strain ATCC BAA-98 / CGA009)).